The following is a 188-amino-acid chain: Probable chorismate pyruvate-lyase (188 aa).

Residues R90, L128, and E175 each contribute to the substrate site.

The protein belongs to the UbiC family.

Its subcellular location is the cytoplasm. The enzyme catalyses chorismate = 4-hydroxybenzoate + pyruvate. Its pathway is cofactor biosynthesis; ubiquinone biosynthesis. Its function is as follows. Removes the pyruvyl group from chorismate, with concomitant aromatization of the ring, to provide 4-hydroxybenzoate (4HB) for the ubiquinone pathway. This is Probable chorismate pyruvate-lyase from Marinobacter nauticus (strain ATCC 700491 / DSM 11845 / VT8) (Marinobacter aquaeolei).